The sequence spans 357 residues: N-acetyl-gamma-glutamyl-phosphate reductase (357 aa).

C160 is an active-site residue.

Belongs to the NAGSA dehydrogenase family. Type 1 subfamily.

Its subcellular location is the cytoplasm. The catalysed reaction is N-acetyl-L-glutamate 5-semialdehyde + phosphate + NADP(+) = N-acetyl-L-glutamyl 5-phosphate + NADPH + H(+). Its pathway is amino-acid biosynthesis; L-arginine biosynthesis; N(2)-acetyl-L-ornithine from L-glutamate: step 3/4. Catalyzes the NADPH-dependent reduction of N-acetyl-5-glutamyl phosphate to yield N-acetyl-L-glutamate 5-semialdehyde. This is N-acetyl-gamma-glutamyl-phosphate reductase from Prochlorococcus marinus (strain MIT 9313).